The following is a 499-amino-acid chain: Apolipoprotein N-acyltransferase (499 aa).

The next 6 membrane-spanning stretches (helical) occupy residues 18–38 (FSPY…LIIT), 50–70 (LGFL…YISI), 82–102 (IIII…FVIL), 105–125 (FFFP…AWMI), 156–176 (PIIG…MCVL), and 182–202 (SYYP…LNFF). In terms of domain architecture, CN hydrolase spans 217-461 (IQGNISQHTY…NDFLLEEVFS (245 aa)). The active-site Proton acceptor is the Glu-257. The active site involves Lys-320. Cys-372 functions as the Nucleophile in the catalytic mechanism. Residues 476–496 (LLFFSIICFIISFFIKIKLIF) traverse the membrane as a helical segment.

Belongs to the CN hydrolase family. Apolipoprotein N-acyltransferase subfamily.

The protein resides in the cell membrane. The catalysed reaction is N-terminal S-1,2-diacyl-sn-glyceryl-L-cysteinyl-[lipoprotein] + a glycerophospholipid = N-acyl-S-1,2-diacyl-sn-glyceryl-L-cysteinyl-[lipoprotein] + a 2-acyl-sn-glycero-3-phospholipid + H(+). It participates in protein modification; lipoprotein biosynthesis (N-acyl transfer). In terms of biological role, catalyzes the phospholipid dependent N-acylation of the N-terminal cysteine of apolipoprotein, the last step in lipoprotein maturation. In Wigglesworthia glossinidia brevipalpis, this protein is Apolipoprotein N-acyltransferase.